The chain runs to 399 residues: Tryptophan synthase beta chain (399 aa).

Lys92 is subject to N6-(pyridoxal phosphate)lysine.

It belongs to the TrpB family. Tetramer of two alpha and two beta chains. It depends on pyridoxal 5'-phosphate as a cofactor.

It catalyses the reaction (1S,2R)-1-C-(indol-3-yl)glycerol 3-phosphate + L-serine = D-glyceraldehyde 3-phosphate + L-tryptophan + H2O. It participates in amino-acid biosynthesis; L-tryptophan biosynthesis; L-tryptophan from chorismate: step 5/5. Functionally, the beta subunit is responsible for the synthesis of L-tryptophan from indole and L-serine. The protein is Tryptophan synthase beta chain of Legionella pneumophila (strain Paris).